Reading from the N-terminus, the 200-residue chain is 3-isopropylmalate dehydratase small subunit (200 aa).

It belongs to the LeuD family. LeuD type 1 subfamily. Heterodimer of LeuC and LeuD.

It catalyses the reaction (2R,3S)-3-isopropylmalate = (2S)-2-isopropylmalate. Its pathway is amino-acid biosynthesis; L-leucine biosynthesis; L-leucine from 3-methyl-2-oxobutanoate: step 2/4. Catalyzes the isomerization between 2-isopropylmalate and 3-isopropylmalate, via the formation of 2-isopropylmaleate. This chain is 3-isopropylmalate dehydratase small subunit, found in Erythrobacter litoralis (strain HTCC2594).